Here is a 219-residue protein sequence, read N- to C-terminus: Thiamine-phosphate synthase (219 aa).

4-amino-2-methyl-5-(diphosphooxymethyl)pyrimidine-binding positions include glutamine 45–lysine 49 and asparagine 77. Residues aspartate 78 and aspartate 97 each coordinate Mg(2+). Threonine 116 is a binding site for 4-amino-2-methyl-5-(diphosphooxymethyl)pyrimidine. Serine 142–threonine 144 contributes to the 2-[(2R,5Z)-2-carboxy-4-methylthiazol-5(2H)-ylidene]ethyl phosphate binding site. Lysine 145 contacts 4-amino-2-methyl-5-(diphosphooxymethyl)pyrimidine. Residues glycine 173 and valine 193–threonine 194 each bind 2-[(2R,5Z)-2-carboxy-4-methylthiazol-5(2H)-ylidene]ethyl phosphate.

This sequence belongs to the thiamine-phosphate synthase family. Mg(2+) serves as cofactor.

It carries out the reaction 2-[(2R,5Z)-2-carboxy-4-methylthiazol-5(2H)-ylidene]ethyl phosphate + 4-amino-2-methyl-5-(diphosphooxymethyl)pyrimidine + 2 H(+) = thiamine phosphate + CO2 + diphosphate. The enzyme catalyses 2-(2-carboxy-4-methylthiazol-5-yl)ethyl phosphate + 4-amino-2-methyl-5-(diphosphooxymethyl)pyrimidine + 2 H(+) = thiamine phosphate + CO2 + diphosphate. It catalyses the reaction 4-methyl-5-(2-phosphooxyethyl)-thiazole + 4-amino-2-methyl-5-(diphosphooxymethyl)pyrimidine + H(+) = thiamine phosphate + diphosphate. The protein operates within cofactor biosynthesis; thiamine diphosphate biosynthesis; thiamine phosphate from 4-amino-2-methyl-5-diphosphomethylpyrimidine and 4-methyl-5-(2-phosphoethyl)-thiazole: step 1/1. Condenses 4-methyl-5-(beta-hydroxyethyl)thiazole monophosphate (THZ-P) and 2-methyl-4-amino-5-hydroxymethyl pyrimidine pyrophosphate (HMP-PP) to form thiamine monophosphate (TMP). This chain is Thiamine-phosphate synthase, found in Caldicellulosiruptor bescii (strain ATCC BAA-1888 / DSM 6725 / KCTC 15123 / Z-1320) (Anaerocellum thermophilum).